Consider the following 155-residue polypeptide: Large ribosomal subunit protein uL22 (155 aa).

The protein belongs to the universal ribosomal protein uL22 family. Part of the 50S ribosomal subunit.

In terms of biological role, this protein binds specifically to 23S rRNA. It makes multiple contacts with different domains of the 23S rRNA in the assembled 50S subunit and ribosome. Functionally, the globular domain of the protein is located near the polypeptide exit tunnel on the outside of the subunit, while an extended beta-hairpin is found that lines the wall of the exit tunnel in the center of the 70S ribosome. This Pyrococcus horikoshii (strain ATCC 700860 / DSM 12428 / JCM 9974 / NBRC 100139 / OT-3) protein is Large ribosomal subunit protein uL22.